Here is a 284-residue protein sequence, read N- to C-terminus: NAD kinase (284 aa).

Residue D70 is the Proton acceptor of the active site. Residues 70–71, 139–140, K167, D169, L177, 180–185, and Q236 each bind NAD(+); these read DG, NE, and TAYNLS.

The protein belongs to the NAD kinase family. It depends on a divalent metal cation as a cofactor.

Its subcellular location is the cytoplasm. The catalysed reaction is NAD(+) + ATP = ADP + NADP(+) + H(+). Functionally, involved in the regulation of the intracellular balance of NAD and NADP, and is a key enzyme in the biosynthesis of NADP. Catalyzes specifically the phosphorylation on 2'-hydroxyl of the adenosine moiety of NAD to yield NADP. The protein is NAD kinase of Helicobacter pylori (strain P12).